The primary structure comprises 273 residues: MPELPEVETLKNSLKDKLIGLIIKNIELKRDNLRYNLSPLLTTEILNTNILNVRRRAKYLIIDFGNYYSLVIHLGMSGRFTVQPANYKIQKHDHVIFDLNNCEKLIFNDTRRFGMVYSFKTNFLEEKFFYNLGIEPLSDLLTLEYLKSKLITRTIAIKNLIMDNKIIVGVGNLYASESLHLARIHPHKLGRNLKDDEIENLIKSIREVLTKAITAGGTTLKNFVNGDSKPGYFTQQLRVYGREGQKCFNCSSTILKTKNSGRSTFYCKTCQYT.

Proline 2 serves as the catalytic Schiff-base intermediate with DNA. Residue glutamate 3 is the Proton donor of the active site. Lysine 58 (proton donor; for beta-elimination activity) is an active-site residue. DNA-binding residues include histidine 92, arginine 111, and arginine 153. Residues arginine 238–tyrosine 272 form an FPG-type zinc finger. Arginine 262 functions as the Proton donor; for delta-elimination activity in the catalytic mechanism.

It belongs to the FPG family. As to quaternary structure, monomer. Zn(2+) is required as a cofactor.

It catalyses the reaction Hydrolysis of DNA containing ring-opened 7-methylguanine residues, releasing 2,6-diamino-4-hydroxy-5-(N-methyl)formamidopyrimidine.. The catalysed reaction is 2'-deoxyribonucleotide-(2'-deoxyribose 5'-phosphate)-2'-deoxyribonucleotide-DNA = a 3'-end 2'-deoxyribonucleotide-(2,3-dehydro-2,3-deoxyribose 5'-phosphate)-DNA + a 5'-end 5'-phospho-2'-deoxyribonucleoside-DNA + H(+). In terms of biological role, involved in base excision repair of DNA damaged by oxidation or by mutagenic agents. Acts as a DNA glycosylase that recognizes and removes damaged bases. Has a preference for oxidized purines, such as 7,8-dihydro-8-oxoguanine (8-oxoG). Has AP (apurinic/apyrimidinic) lyase activity and introduces nicks in the DNA strand. Cleaves the DNA backbone by beta-delta elimination to generate a single-strand break at the site of the removed base with both 3'- and 5'-phosphates. The chain is Formamidopyrimidine-DNA glycosylase from Rickettsia canadensis (strain McKiel).